The following is a 341-amino-acid chain: HTH-type transcriptional repressor PurR (341 aa).

The HTH lacI-type domain maps to Ala2–Val56. The H-T-H motif DNA-binding region spans Ile4–Asn23. Residues Ser48–Val56 mediate DNA binding. Tyr73, Arg190, Thr192, Phe221, and Asp275 together coordinate hypoxanthine.

Homodimer.

Its pathway is purine metabolism; purine nucleotide biosynthesis [regulation]. Functionally, is the main repressor of the genes involved in the de novo synthesis of purine nucleotides, regulating purB, purC, purEK, purF, purHD, purL, purMN and guaBA expression. PurR is allosterically activated to bind its cognate DNA by binding the purine corepressors, hypoxanthine or guanine, thereby effecting transcription repression. The sequence is that of HTH-type transcriptional repressor PurR from Escherichia coli (strain UTI89 / UPEC).